The chain runs to 208 residues: V-type ATP synthase subunit E (208 aa).

The protein belongs to the V-ATPase E subunit family.

Its function is as follows. Produces ATP from ADP in the presence of a proton gradient across the membrane. The sequence is that of V-type ATP synthase subunit E from Chlamydia trachomatis serovar A (strain ATCC VR-571B / DSM 19440 / HAR-13).